The chain runs to 367 residues: UDP-N-acetylglucosamine--N-acetylmuramyl-(pentapeptide) pyrophosphoryl-undecaprenol N-acetylglucosamine transferase (367 aa).

UDP-N-acetyl-alpha-D-glucosamine is bound by residues 11-13 (TAG), asparagine 125, arginine 163, serine 197, and glutamine 289.

Belongs to the glycosyltransferase 28 family. MurG subfamily.

The protein resides in the cell membrane. The enzyme catalyses di-trans,octa-cis-undecaprenyl diphospho-N-acetyl-alpha-D-muramoyl-L-alanyl-D-glutamyl-meso-2,6-diaminopimeloyl-D-alanyl-D-alanine + UDP-N-acetyl-alpha-D-glucosamine = di-trans,octa-cis-undecaprenyl diphospho-[N-acetyl-alpha-D-glucosaminyl-(1-&gt;4)]-N-acetyl-alpha-D-muramoyl-L-alanyl-D-glutamyl-meso-2,6-diaminopimeloyl-D-alanyl-D-alanine + UDP + H(+). The protein operates within cell wall biogenesis; peptidoglycan biosynthesis. Functionally, cell wall formation. Catalyzes the transfer of a GlcNAc subunit on undecaprenyl-pyrophosphoryl-MurNAc-pentapeptide (lipid intermediate I) to form undecaprenyl-pyrophosphoryl-MurNAc-(pentapeptide)GlcNAc (lipid intermediate II). In Clavibacter sepedonicus (Clavibacter michiganensis subsp. sepedonicus), this protein is UDP-N-acetylglucosamine--N-acetylmuramyl-(pentapeptide) pyrophosphoryl-undecaprenol N-acetylglucosamine transferase.